A 529-amino-acid chain; its full sequence is Peptide chain release factor 3 (529 aa).

The 269-residue stretch at 10 to 278 (ARRRTFAIIS…NFVDLAPAPR (269 aa)) folds into the tr-type G domain. GTP-binding positions include 19–26 (SHPDAGKT), 87–91 (DTPGH), and 141–144 (NKLD).

Belongs to the TRAFAC class translation factor GTPase superfamily. Classic translation factor GTPase family. PrfC subfamily.

It localises to the cytoplasm. In terms of biological role, increases the formation of ribosomal termination complexes and stimulates activities of RF-1 and RF-2. It binds guanine nucleotides and has strong preference for UGA stop codons. It may interact directly with the ribosome. The stimulation of RF-1 and RF-2 is significantly reduced by GTP and GDP, but not by GMP. The sequence is that of Peptide chain release factor 3 from Nitratidesulfovibrio vulgaris (strain ATCC 29579 / DSM 644 / CCUG 34227 / NCIMB 8303 / VKM B-1760 / Hildenborough) (Desulfovibrio vulgaris).